Here is a 413-residue protein sequence, read N- to C-terminus: Calsequestrin-2 (413 aa).

The first 19 residues, 1 to 19 (MKRIYLLVVGLYLLSFSRA), serve as a signal peptide directing secretion. Position 282 is a phosphotyrosine (Y282). A glycan (N-linked (GlcNAc...) asparagine) is linked at N335. Residues 365-413 (VLSGKINTEDDDNEDEDDDGDNDNDDDDDDDDNSDEDNDDSDDDDDDDE) form a disordered region. Residues 373-413 (EDDDNEDEDDDGDNDNDDDDDDDDNSDEDNDDSDDDDDDDE) are compositionally biased toward acidic residues. 2 positions are modified to phosphoserine: S398 and S405.

The protein belongs to the calsequestrin family. As to quaternary structure, monomer, homodimer and homooligomer. Mostly monomeric in the absence of calcium. Forms higher oligomers in a calcium-dependent manner. Dimers associate to form tetramers, that then form linear homomer chains. Interacts with ASPH and TRDN. Phosphorylation in the C-terminus, probably by CK2, moderately increases calcium buffering capacity. In terms of processing, N-glycosylated. As to expression, detected in stomach and vas deferens (at protein level).

It localises to the sarcoplasmic reticulum lumen. Functionally, calsequestrin is a high-capacity, moderate affinity, calcium-binding protein and thus acts as an internal calcium store in muscle. Calcium ions are bound by clusters of acidic residues at the protein surface, especially at the interface between subunits. Can bind around 60 Ca(2+) ions. Regulates the release of lumenal Ca(2+) via the calcium release channel RYR2; this plays an important role in triggering muscle contraction. Plays a role in excitation-contraction coupling in the heart and in regulating the rate of heart beats. This chain is Calsequestrin-2 (Casq2), found in Rattus norvegicus (Rat).